A 217-amino-acid polypeptide reads, in one-letter code: Peroxiredoxin (217 aa).

In terms of domain architecture, Thioredoxin spans 2 to 159 (AVIGEKFPDV…VVRLVKALQT (158 aa)). Residue C46 is the Cysteine sulfenic acid (-SOH) intermediate of the active site. R122 contributes to the substrate binding site.

This sequence belongs to the peroxiredoxin family. Prx6 subfamily. In terms of assembly, homodecamer. Pentamer of dimers that assemble into a ring structure.

It localises to the cytoplasm. The catalysed reaction is a hydroperoxide + [thioredoxin]-dithiol = an alcohol + [thioredoxin]-disulfide + H2O. Functionally, thiol-specific peroxidase that catalyzes the reduction of hydrogen peroxide and organic hydroperoxides to water and alcohols, respectively. Plays a role in cell protection against oxidative stress by detoxifying peroxides. The sequence is that of Peroxiredoxin from Methanococcus vannielii (strain ATCC 35089 / DSM 1224 / JCM 13029 / OCM 148 / SB).